We begin with the raw amino-acid sequence, 447 residues long: Vasoactive intestinal polypeptide receptor (447 aa).

Topologically, residues 1–103 (MCDVVNEIEL…VDDDSFFRSV (103 aa)) are extracellular. Intrachain disulfides connect C15/C36, C27/C69, and C50/C86. N-linked (GlcNAc...) asparagine glycosylation is found at N17, N22, N64, and N91. A helical transmembrane segment spans residues 104 to 128 (KIGYTIGHSVSLISLTTAIVILCMS). Residues 129–135 (RKLHCTR) lie on the Cytoplasmic side of the membrane. The chain crosses the membrane as a helical span at residues 136 to 155 (NYIHMHLFVSFILKAIAVFV). Over 156-178 (KDAVLYDVIQESDNCSTASVGCK) the chain is Extracellular. An N-linked (GlcNAc...) asparagine glycan is attached at N169. A disulfide bridge links C177 with C247. Residues 179–202 (AVIVFFQYCIMASFFWLLVEGLYL) form a helical membrane-spanning segment. Residues 203–216 (HALLAVSFFSERKY) lie on the Cytoplasmic side of the membrane. The helical transmembrane segment at 217-238 (FWWYILIGWGGPTIFIMAWSFA) threads the bilayer. The Extracellular portion of the chain corresponds to 239–256 (KAYFNDVGCWDIIENSDL). A helical transmembrane segment spans residues 257–280 (FWWIIKTPILASILMNFILFICII). Over 281–305 (RILRQKINCPDIGRNESNQYSRLAK) the chain is Cytoplasmic. A helical membrane pass occupies residues 306-325 (STLLLIPLFGINFIIFAFIP). Residues 326–337 (ENIKTELRLVFD) are Extracellular-facing. Residues 338-357 (LILGSFQGFVVAVLYCFLNG) traverse the membrane as a helical segment. The Cytoplasmic segment spans residues 358–447 (EVQAEIKRKW…KGHEDVREVS (90 aa)).

Belongs to the G-protein coupled receptor 2 family.

The protein localises to the cell membrane. Functionally, this is a receptor for VIP. The activity of this receptor is mediated by G proteins which activate adenylyl cyclase. The protein is Vasoactive intestinal polypeptide receptor (vipr1) of Carassius auratus (Goldfish).